Reading from the N-terminus, the 356-residue chain is UDP-N-acetylglucosamine--N-acetylmuramyl-(pentapeptide) pyrophosphoryl-undecaprenol N-acetylglucosamine transferase (356 aa).

Ser195 and Gln287 together coordinate UDP-N-acetyl-alpha-D-glucosamine.

The protein belongs to the glycosyltransferase 28 family. MurG subfamily.

The protein localises to the cell membrane. The enzyme catalyses Mur2Ac(oyl-L-Ala-gamma-D-Glu-L-Lys-D-Ala-D-Ala)-di-trans,octa-cis-undecaprenyl diphosphate + UDP-N-acetyl-alpha-D-glucosamine = beta-D-GlcNAc-(1-&gt;4)-Mur2Ac(oyl-L-Ala-gamma-D-Glu-L-Lys-D-Ala-D-Ala)-di-trans,octa-cis-undecaprenyl diphosphate + UDP + H(+). It participates in cell wall biogenesis; peptidoglycan biosynthesis. In terms of biological role, cell wall formation. Catalyzes the transfer of a GlcNAc subunit on undecaprenyl-pyrophosphoryl-MurNAc-pentapeptide (lipid intermediate I) to form undecaprenyl-pyrophosphoryl-MurNAc-(pentapeptide)GlcNAc (lipid intermediate II). This Streptococcus sanguinis (strain SK36) protein is UDP-N-acetylglucosamine--N-acetylmuramyl-(pentapeptide) pyrophosphoryl-undecaprenol N-acetylglucosamine transferase.